The following is a 616-amino-acid chain: Dihydroxy-acid dehydratase (616 aa).

Residue aspartate 81 participates in Mg(2+) binding. Residue cysteine 122 coordinates [2Fe-2S] cluster. Mg(2+) is bound by residues aspartate 123 and lysine 124. Position 124 is an N6-carboxylysine (lysine 124). Cysteine 195 contacts [2Fe-2S] cluster. Glutamate 491 is a Mg(2+) binding site. The Proton acceptor role is filled by serine 517.

The protein belongs to the IlvD/Edd family. Homodimer. [2Fe-2S] cluster serves as cofactor. Requires Mg(2+) as cofactor.

It catalyses the reaction (2R)-2,3-dihydroxy-3-methylbutanoate = 3-methyl-2-oxobutanoate + H2O. The catalysed reaction is (2R,3R)-2,3-dihydroxy-3-methylpentanoate = (S)-3-methyl-2-oxopentanoate + H2O. The protein operates within amino-acid biosynthesis; L-isoleucine biosynthesis; L-isoleucine from 2-oxobutanoate: step 3/4. Its pathway is amino-acid biosynthesis; L-valine biosynthesis; L-valine from pyruvate: step 3/4. Functions in the biosynthesis of branched-chain amino acids. Catalyzes the dehydration of (2R,3R)-2,3-dihydroxy-3-methylpentanoate (2,3-dihydroxy-3-methylvalerate) into 2-oxo-3-methylpentanoate (2-oxo-3-methylvalerate) and of (2R)-2,3-dihydroxy-3-methylbutanoate (2,3-dihydroxyisovalerate) into 2-oxo-3-methylbutanoate (2-oxoisovalerate), the penultimate precursor to L-isoleucine and L-valine, respectively. This is Dihydroxy-acid dehydratase from Edwardsiella ictaluri (strain 93-146).